Reading from the N-terminus, the 71-residue chain is Transcription modulator YdgT (71 aa).

Belongs to the Hha/YmoA/Cnu family. In terms of assembly, forms complexes with both H-NS and StpA.

In terms of biological role, binds to H-NS and modified the range of genes it silences; H-NS alonge silences core gene while the H-NS-Hha complex (and presumably also H-NS-YdgT) silences genes acquired by horizontal gene transfer. Plays a role silencing virulence factors in the absence of factors that induce pathogenicity. The complex formed with H-NS binds to the specific 26-bp cnb site in the origin of replication oriC. The sequence is that of Transcription modulator YdgT (ydgT) from Salmonella choleraesuis (strain SC-B67).